Consider the following 115-residue polypeptide: Class I hydrophobin C (115 aa).

The signal sequence occupies residues 1–19 (MFSRVLVAALVALPVLVSA). 4 cysteine pairs are disulfide-bonded: Cys36-Cys93, Cys43-Cys87, Cys44-Cys74, and Cys94-Cys108.

The protein belongs to the fungal hydrophobin family. Self-assembles to form functional amyloid fibrils called rodlets. Self-assembly into fibrillar rodlets occurs spontaneously at hydrophobic:hydrophilic interfaces and the rodlets further associate laterally to form amphipathic monolayers.

Its subcellular location is the secreted. It is found in the cell wall. Functionally, aerial growth, conidiation, and dispersal of filamentous fungi in the environment rely upon a capability of their secreting small amphipathic proteins called hydrophobins (HPBs) with low sequence identity. Class I can self-assemble into an outermost layer of rodlet bundles on aerial cell surfaces, conferring cellular hydrophobicity that supports fungal growth, development and dispersal; whereas Class II form highly ordered films at water-air interfaces through intermolecular interactions but contribute nothing to the rodlet structure. The protein is Class I hydrophobin C of Agaricus bisporus (White button mushroom).